A 136-amino-acid polypeptide reads, in one-letter code: Ribosome-binding factor A (136 aa).

The protein belongs to the RbfA family. As to quaternary structure, monomer. Binds 30S ribosomal subunits, but not 50S ribosomal subunits or 70S ribosomes.

The protein localises to the cytoplasm. Functionally, one of several proteins that assist in the late maturation steps of the functional core of the 30S ribosomal subunit. Associates with free 30S ribosomal subunits (but not with 30S subunits that are part of 70S ribosomes or polysomes). Required for efficient processing of 16S rRNA. May interact with the 5'-terminal helix region of 16S rRNA. This chain is Ribosome-binding factor A, found in Yersinia pestis bv. Antiqua (strain Antiqua).